The chain runs to 1041 residues: Desmoglein-4 (1041 aa).

Residues 1-23 (MDWLLFRNICLLILFMVVLGVNS) form the signal peptide. Residues 24 to 49 (EFIVEVKELDIENGTTTWQTVRRQKR) constitute a propeptide that is removed on maturation. Cadherin domains lie at 50–157 (EWIK…PPVF), 158–269 (TQNV…FPIL), 270–385 (EKTS…GPTF), and 389–497 (SMTF…CPVI). The Extracellular segment spans residues 50–634 (EWIKFAAACR…RQSNVGLGPA (585 aa)). An N-linked (GlcNAc...) asparagine glycan is attached at Asn110. N-linked (GlcNAc...) asparagine glycosylation occurs at Asn545. A helical membrane pass occupies residues 635–655 (GIGMIILGLLLLLLSPLLLLM). At 656–1041 (CCCKRRQPEG…RYSNMHYSRQ (386 aa)) the chain is on the cytoplasmic side. Desmoglein repeat repeat units follow at residues 884-910 (TLSE…IVTE) and 911-941 (TYTT…ETVM). Positions 1014–1041 (ISQTTGSTSPMTSQHRVTRYSNMHYSRQ) are disordered.

In terms of assembly, interacts with JUP. As to expression, strongly expressed in the skin; during the anagen stage of hair follicles in the matrix, precortex and inner rooth sheath.

It localises to the cell membrane. The protein resides in the cell junction. The protein localises to the desmosome. Its function is as follows. A component of desmosome cell-cell junctions which are required for positive regulation of cellular adhesion. Coordinates the transition from proliferation to differentiation in hair follicle keratinocytes. Plays a role in moderating lymphocyte migration to inflamed skin and maintaining homeostasis of the epidermal inflammatory response. This chain is Desmoglein-4 (Dsg4), found in Mus musculus (Mouse).